The following is a 173-amino-acid chain: Lipoprotein signal peptidase (173 aa).

4 consecutive transmembrane segments (helical) span residues 14-34 (LAWLWLTVLIVAVDQVSKYYF), 44-64 (IIVIPDYFSWTLAYNTGAAFS), 72-92 (WQRWLFALIAVVVSAVLVVWL), and 98-118 (DDTWLAIALALVLGGALGNLY). Residues Asp-128 and Asp-147 contribute to the active site. A helical membrane pass occupies residues 139–159 (YFPAFNVADSAITVGAIMLAL).

This sequence belongs to the peptidase A8 family.

The protein resides in the cell inner membrane. The enzyme catalyses Release of signal peptides from bacterial membrane prolipoproteins. Hydrolyzes -Xaa-Yaa-Zaa-|-(S,diacylglyceryl)Cys-, in which Xaa is hydrophobic (preferably Leu), and Yaa (Ala or Ser) and Zaa (Gly or Ala) have small, neutral side chains.. Its pathway is protein modification; lipoprotein biosynthesis (signal peptide cleavage). Its function is as follows. This protein specifically catalyzes the removal of signal peptides from prolipoproteins. The sequence is that of Lipoprotein signal peptidase from Pseudomonas syringae pv. tomato (strain ATCC BAA-871 / DC3000).